Here is a 440-residue protein sequence, read N- to C-terminus: Adenylosuccinate synthetase 1, chloroplastic (440 aa).

Residues 13-19 (GDEGKGK) and 41-43 (GHT) contribute to the GTP site. The active-site Proton acceptor is aspartate 14. Positions 14 and 41 each coordinate Mg(2+). Residues 14–17 (DEGK), 39–42 (NAGH), threonine 135, arginine 149, glutamine 230, threonine 245, and arginine 313 contribute to the IMP site. Histidine 42 functions as the Proton donor in the catalytic mechanism. A substrate-binding site is contributed by 309–315 (TVTRRKR). GTP-binding positions include arginine 315 and 341-343 (KLD).

The protein belongs to the adenylosuccinate synthetase family. As to quaternary structure, homodimer. Requires Mg(2+) as cofactor.

The protein resides in the plastid. It is found in the chloroplast. It carries out the reaction IMP + L-aspartate + GTP = N(6)-(1,2-dicarboxyethyl)-AMP + GDP + phosphate + 2 H(+). It functions in the pathway purine metabolism; AMP biosynthesis via de novo pathway; AMP from IMP: step 1/2. In terms of biological role, plays an important role in the de novo pathway and in the salvage pathway of purine nucleotide biosynthesis. Catalyzes the first committed step in the biosynthesis of AMP from IMP. The polypeptide is Adenylosuccinate synthetase 1, chloroplastic (Ricinus communis (Castor bean)).